A 750-amino-acid chain; its full sequence is Photosystem I P700 chlorophyll a apoprotein A1 (750 aa).

The next 8 helical transmembrane spans lie at 70–93 (VFSAHFGQLSIIFLWLSGMYFHGA), 156–179 (LYCTAIGALVFAALMLFAGWFHYH), 195–219 (LNHHLAGLLGLGSLSWAGHQVHVSL), 291–309 (IAHHHLAIAILFLIAGHMY), 346–369 (WHAQLSLNLAMLGSLTIIVAHHMY), 385–411 (LSLFTHHMWIGGFLIVGAAAHAAIFMV), 433–455 (AIISHLNWVCIFLGFHSFGLYIH), and 531–549 (FLVHHIHAFTIHVTVLILL). Cys573 and Cys582 together coordinate [4Fe-4S] cluster. The next 2 membrane-spanning stretches (helical) occupy residues 589–610 (HVFLGLFWMYNAISVVIFHFSW) and 664–686 (LSAYGLFFLGAHFVWAFSLMFLF). His675 lines the chlorophyll a' pocket. 2 residues coordinate chlorophyll a: Met683 and Tyr691. Trp692 contributes to the phylloquinone binding site. A helical membrane pass occupies residues 724-744 (AVGVTHYLLGGIATTWAFFLA).

This sequence belongs to the PsaA/PsaB family. The PsaA/B heterodimer binds the P700 chlorophyll special pair and subsequent electron acceptors. PSI consists of a core antenna complex that captures photons, and an electron transfer chain that converts photonic excitation into a charge separation. The eukaryotic PSI reaction center is composed of at least 11 subunits. P700 is a chlorophyll a/chlorophyll a' dimer, A0 is one or more chlorophyll a, A1 is one or both phylloquinones and FX is a shared 4Fe-4S iron-sulfur center. serves as cofactor.

Its subcellular location is the plastid. It is found in the chloroplast thylakoid membrane. It catalyses the reaction reduced [plastocyanin] + hnu + oxidized [2Fe-2S]-[ferredoxin] = oxidized [plastocyanin] + reduced [2Fe-2S]-[ferredoxin]. In terms of biological role, psaA and PsaB bind P700, the primary electron donor of photosystem I (PSI), as well as the electron acceptors A0, A1 and FX. PSI is a plastocyanin-ferredoxin oxidoreductase, converting photonic excitation into a charge separation, which transfers an electron from the donor P700 chlorophyll pair to the spectroscopically characterized acceptors A0, A1, FX, FA and FB in turn. Oxidized P700 is reduced on the lumenal side of the thylakoid membrane by plastocyanin. The polypeptide is Photosystem I P700 chlorophyll a apoprotein A1 (Arabidopsis thaliana (Mouse-ear cress)).